Consider the following 142-residue polypeptide: Matrix protein (142 aa).

Homooligomer. Forms homotetramers. Interacts with phosphoprotein P. Binds to ssRNA.

The protein resides in the virion. Its subcellular location is the host cytoplasm. It localises to the host cell membrane. It is found in the host nucleus. In terms of biological role, plays a crucial role in virion assembly and budding. This is Matrix protein (M) from Borna disease virus (strain V) (BDV).